A 937-amino-acid polypeptide reads, in one-letter code: Protocadherin alpha-7 (937 aa).

A signal peptide spans 1 to 29 (MVCPNGYDPGGRHLLLFIIILAAWEAGRG). Cadherin domains are found at residues 30-133 (QLHY…PPVF), 134-242 (PATQ…APVF), 243-350 (DRTL…APQL), 351-455 (TLTS…APAF), 456-565 (AQPE…APAL), and 581-678 (VPRS…APKA). Residues 30–697 (QLHYSVPEEA…GPETELVDVN (668 aa)) are Extracellular-facing. Cysteine 96 and cysteine 102 are disulfide-bonded. N-linked (GlcNAc...) asparagine glycans are attached at residues asparagine 254 and asparagine 265. Asparagine 548 is a glycosylation site (N-linked (GlcNAc...) asparagine). A helical transmembrane segment spans residues 698 to 718 (VYLIIAICAVSSLLVLTLLLY). The Cytoplasmic segment spans residues 719–937 (TALRCSAPSS…GNSTTDNSDQ (219 aa)). 2 disordered regions span residues 755–795 (RQRV…DWRY) and 814–937 (ILRA…NSDQ). PXXP repeat units follow at residues 774–777 (PSLP), 786–789 (PRQP), 819–822 (PGGP), 860–863 (PGNP), and 878–881 (PGSP). The interval 774-881 (PSLPQGPSST…PDKFIIPGSP (108 aa)) is 5 X 4 AA repeats of P-X-X-P. The segment covering 775-787 (SLPQGPSSTDNPR) has biased composition (polar residues). Basic and acidic residues predominate over residues 896–910 (DKSDFITFGKKEETK).

Forms homodimers in trans (molecules expressed by two different cells). Forms promiscuous heterodimers in cis (at the plasma membrane of the same cell) with other protocadherins.

It localises to the cell membrane. Functionally, calcium-dependent cell-adhesion protein involved in cells self-recognition and non-self discrimination. Thereby, it is involved in the establishment and maintenance of specific neuronal connections in the brain. In Homo sapiens (Human), this protein is Protocadherin alpha-7.